A 396-amino-acid polypeptide reads, in one-letter code: MSSDTKTLENSKGNSATDADTKNPSSSDSRAIEQLVTQGNMAYAQKNYEEAVDKYGQALMQSESIHGSESLENRNVLWLYGKSLFQIAIENSQVLGNALGAKESVSQATESFEEPEAIGSFTFSGQKIENKYTVNEENSSIAHPEKESEEKETNEASPASEEDEDDFNVAWEVLDLTRVMQSKAVDAYPDSKDEKIRLADIYDLLGELSLEIENFSQASQDLKTALEWKEKVYNVSNNTLLSEAHYKLALALEFTNPEDPSNKSRACEHVEKAAEILKNVLNERENEVTDKKGKGKQKAEESTLTSDLENLREMLSELEQKTLDLKHGAPSLEEAVMSKMHESSLLSKDSSSLAQAVAEAVKNANDLGGLVKRKRTKQEVTSSSQKEGPKDKKKKD.

A disordered region spans residues 1 to 31; that stretch reads MSSDTKTLENSKGNSATDADTKNPSSSDSRA. TPR repeat units follow at residues 32-65 and 89-122; these read IEQLVTQGNMAYAQKNYEEAVDKYGQALMQSESI and IENSQVLGNALGAKESVSQATESFEEPEAIGSFT. The segment at 135 to 164 is disordered; the sequence is NEENSSIAHPEKESEEKETNEASPASEEDE. A compositionally biased stretch (basic and acidic residues) spans 143-154; it reads HPEKESEEKETN. The stretch at 199–232 is one TPR 3 repeat; it reads ADIYDLLGELSLEIENFSQASQDLKTALEWKEKV. The stretch at 267 to 329 forms a coiled coil; the sequence is CEHVEKAAEI…QKTLDLKHGA (63 aa). The span at 284-301 shows a compositional bias: basic and acidic residues; sequence RENEVTDKKGKGKQKAEE. 2 disordered regions span residues 284–307 and 334–396; these read RENEVTDKKGKGKQKAEESTLTSD and EAVM…KKKD. Residues 343-353 show a composition bias toward low complexity; that stretch reads SSLLSKDSSSL.

It belongs to the NASP family. Interacts with cnp1, hht1, hht2 and hht3; has a preference for CENP-A (cnp1) over histone H3 (hht1/2/3).

It is found in the nucleus. In terms of biological role, histone H3 and H3-like CENP-A-specific chaperone. Promotes delivery and incorporation of CENP-A in centromeric chromatin, probably by escorting nascent CENP-A to CENP-A chromatin assembly factors. Required for central core silencing and normal chromosome segregation. The sequence is that of NASP-related protein sim3 (sim3) from Schizosaccharomyces pombe (strain 972 / ATCC 24843) (Fission yeast).